The sequence spans 1967 residues: RNA replication polyprotein (1967 aa).

In terms of domain architecture, Alphavirus-like MT spans 63–252 (SPYAGFPHSH…YEQPLSGGYL (190 aa)). The Fe2OG dioxygenase domain maps to 750 to 841 (TYDCMLAQRY…RVSYTFRRLA (92 aa)). 3 residues coordinate Fe cation: histidine 768, aspartate 770, and histidine 823. Residue arginine 832 coordinates 2-oxoglutarate. The region spanning 884 to 991 (FNVQCVPGDG…GSHFEPLEPK (108 aa)) is the OTU domain. One can recognise a Peptidase C23 domain in the interval 990–1080 (PKEMCVVKAI…MTTDHLSYDG (91 aa)). Catalysis depends on residues cysteine 994 and histidine 1075. One can recognise a (+)RNA virus helicase ATP-binding domain in the interval 1133-1308 (GSTGVMCSEL…DGIEYKFNIL (176 aa)). 1166-1173 (GTFGCGKS) is an ATP binding site. The 147-residue stretch at 1309 to 1455 (SRRFQSSLFR…SARQEDLRRM (147 aa)) folds into the (+)RNA virus helicase C-terminal domain. The region spanning 1748–1855 (GVCTESDYEA…NGRLHVSSKH (108 aa)) is the RdRp catalytic domain.

Belongs to the potexviruses/carlaviruses RNA replication protein family. It depends on Fe(2+) as a cofactor. Post-translationally, specific enzymatic cleavages by the viral protease yield mature proteins.

The catalysed reaction is ATP + H2O = ADP + phosphate + H(+). It catalyses the reaction RNA(n) + a ribonucleoside 5'-triphosphate = RNA(n+1) + diphosphate. Its function is as follows. RNA-directed RNA polymerase involved in viral RNA replication. Functionally, protease: Thiol protease that cleaves the polyprotein. The protein is RNA replication polyprotein of Vaccinium corymbosum (Highbush blueberry).